The primary structure comprises 432 residues: Trigger factor (432 aa).

Residues 163-248 form the PPIase FKBP-type domain; the sequence is GDIAVIDFEG…LKALNKKELP (86 aa).

This sequence belongs to the FKBP-type PPIase family. Tig subfamily.

Its subcellular location is the cytoplasm. The enzyme catalyses [protein]-peptidylproline (omega=180) = [protein]-peptidylproline (omega=0). In terms of biological role, involved in protein export. Acts as a chaperone by maintaining the newly synthesized protein in an open conformation. Functions as a peptidyl-prolyl cis-trans isomerase. This is Trigger factor from Thermoanaerobacter pseudethanolicus (strain ATCC 33223 / 39E) (Clostridium thermohydrosulfuricum).